Here is a 620-residue protein sequence, read N- to C-terminus: Probable indole-3-acetic acid-amido synthetase GH3.7 (620 aa).

This sequence belongs to the IAA-amido conjugating enzyme family. As to expression, ubiquitous.

In terms of biological role, may catalyze the synthesis of indole-3-acetic acid (IAA)-amino acid conjugates, providing a mechanism for the plant to cope with the presence of excess auxin. The chain is Probable indole-3-acetic acid-amido synthetase GH3.7 (GH3.7) from Oryza sativa subsp. japonica (Rice).